The sequence spans 490 residues: Pleckstrin homology domain-containing family O member 2 (490 aa).

The 102-residue stretch at 18–119 (MVDKAGWIKK…WIKALNEGIN (102 aa)) folds into the PH domain. Phosphoserine is present on residues S164 and S167. A disordered region spans residues 173 to 402 (LDLDVPDSGP…DLLGEGPRHP (230 aa)). Low complexity predominate over residues 230–243 (APTPVSASSEVSPE). The residue at position 232 (T232) is a Phosphothreonine. 3 positions are modified to phosphoserine: S235, S237, and S238. Over residues 244–257 (SQEDSETPAEEDSG) the composition is skewed to acidic residues. The residue at position 273 (S273) is a Phosphoserine. The segment covering 277–297 (PSPQEAPAAESAEPSQAPCSE) has biased composition (low complexity). Residues T298 and T311 each carry the phosphothreonine modification. S390 and S468 each carry phosphoserine. A coiled-coil region spans residues 439–481 (SAETLLSQAVEQLRQATQVLQEMRDLGELSQEAPGLREKRKEL).

This chain is Pleckstrin homology domain-containing family O member 2 (PLEKHO2), found in Homo sapiens (Human).